Consider the following 467-residue polypeptide: Asparagine--tRNA ligase (467 aa).

Belongs to the class-II aminoacyl-tRNA synthetase family. As to quaternary structure, homodimer.

It is found in the cytoplasm. The enzyme catalyses tRNA(Asn) + L-asparagine + ATP = L-asparaginyl-tRNA(Asn) + AMP + diphosphate + H(+). This Pasteurella multocida (strain Pm70) protein is Asparagine--tRNA ligase.